We begin with the raw amino-acid sequence, 692 residues long: MAREFSLENTRNIGIMAHIDAGKTTTTERILFYTGRIHKIGETHEGASQMDWMEQEQERGITITSAATTAQWKGHRINIIDTPGHVDFTVEVERSLRVLDGAITVLDAQSGVEPQTETVWRQATTYGVPRIVFVNKMDKIGADFLYSVKTLHDRLHANAHPVQLPIGAEDQFSGIIDLVEMCAYHYHDELGKNIERIEIPEDYRDMAEEYRNKLIEAVAELDEELMMKYLEGEEITKEELKAAIRKATISVEFFPVFCGSAFKNKGVQLLLDGVVDYLPSPVDIPPIKGIVPDTEEEVVREADDDAPFAALAFKVMTDPYVGKLTFFRVYSGTLDSGSYVMNSTKRKRERIGRILQMHANHRQEISKVYAGDIAAAVGLKDTTTGDTLCDEKNLVILESMQFPEPVISVAIEPKSKADQDKMGQALQKLQEEDPTFRAHTDPETGQTIISGMGELHLDIIVDRMRREFKVEANVGAPQVAYRETFRKSAQVEGKFIRQSGGRGQYGHVWIEFSPNERGKGFEFENAIVGGVVPKEYVPAVQAGLEEAMQNGVLAGYPVVDIKAKLFDGSYHDVDSSEMAFKIAASLALKNAATKCDPVLLEPIMKVEVVIPEEYLGDIMGDITSRRGRVEGMEARGNAQVVRAMVPLAEMFGYATSLRSNTQGRGTFTMVFDHYEEVPKNIADEIIKKNKGE.

One can recognise a tr-type G domain in the interval 8 to 282; that stretch reads ENTRNIGIMA…GVVDYLPSPV (275 aa). GTP is bound by residues 17–24, 81–85, and 135–138; these read AHIDAGKT, DTPGH, and NKMD.

Belongs to the TRAFAC class translation factor GTPase superfamily. Classic translation factor GTPase family. EF-G/EF-2 subfamily.

The protein resides in the cytoplasm. Functionally, catalyzes the GTP-dependent ribosomal translocation step during translation elongation. During this step, the ribosome changes from the pre-translocational (PRE) to the post-translocational (POST) state as the newly formed A-site-bound peptidyl-tRNA and P-site-bound deacylated tRNA move to the P and E sites, respectively. Catalyzes the coordinated movement of the two tRNA molecules, the mRNA and conformational changes in the ribosome. The protein is Elongation factor G of Geobacillus sp. (strain WCH70).